Consider the following 147-residue polypeptide: NADH-ubiquinone oxidoreductase chain 3 (147 aa).

A run of 3 helical transmembrane segments spans residues L6–A26, A60–L80, and T84–F104.

The protein belongs to the complex I subunit 3 family.

It localises to the mitochondrion membrane. It catalyses the reaction a ubiquinone + NADH + 5 H(+)(in) = a ubiquinol + NAD(+) + 4 H(+)(out). In terms of biological role, core subunit of the mitochondrial membrane respiratory chain NADH dehydrogenase (Complex I) that is believed to belong to the minimal assembly required for catalysis. Complex I functions in the transfer of electrons from NADH to the respiratory chain. The immediate electron acceptor for the enzyme is believed to be ubiquinone. The chain is NADH-ubiquinone oxidoreductase chain 3 (ndh-3) from Neurospora crassa (strain ATCC 24698 / 74-OR23-1A / CBS 708.71 / DSM 1257 / FGSC 987).